The sequence spans 372 residues: Cytochrome b (372 aa).

The next 4 helical transmembrane spans lie at 25-45, 69-90, 105-125, and 170-190; these read FGSMLLTCLALQTSTGFFLAI, WIIQNLHAIGASMFFICIYTHI, WLSGTMLLIMLMATSFFGYVL, and FFALHFILPFMIISLSSIHII. 2 residues coordinate heme b: H75 and H89. H174 and H188 together coordinate heme b. H193 is an a ubiquinone binding site. 4 consecutive transmembrane segments (helical) span residues 218 to 238, 280 to 300, 312 to 332, and 339 to 358; these read YKDTLMITAMITSMLIIMSFM, LGGTLALLMSILILTTAPFTH, LTQIMFWTLIVTFITITWSAT, and FIFISQTASIIYFSFFIINP.

The protein belongs to the cytochrome b family. The cytochrome bc1 complex contains 3 respiratory subunits (MT-CYB, CYC1 and UQCRFS1), 2 core proteins (UQCRC1 and UQCRC2) and probably 6 low-molecular weight proteins. Requires heme b as cofactor.

The protein localises to the mitochondrion inner membrane. Functionally, component of the ubiquinol-cytochrome c reductase complex (complex III or cytochrome b-c1 complex) that is part of the mitochondrial respiratory chain. The b-c1 complex mediates electron transfer from ubiquinol to cytochrome c. Contributes to the generation of a proton gradient across the mitochondrial membrane that is then used for ATP synthesis. The protein is Cytochrome b (MT-CYB) of Hydrophis semperi (Lake Taal snake).